A 1135-amino-acid chain; its full sequence is Retinoblastoma-like protein 2 (1135 aa).

The segment at 1–43 (MASGGNQSPPPPPAAAASSEEEEEDGDAADRAQPAGSPSHQIQ) is disordered. S410 bears the Phosphoserine mark. The residue at position 414 (T414) is a Phosphothreonine. Positions 414–613 (TPVSTAAHSL…DRIRDNENRV (200 aa)) are domain A. The pocket; binds E1A stretch occupies residues 414 to 1021 (TPVSTAAHSL…QAFAMKYSQA (608 aa)). S417 carries O-linked (GlcNAc) serine glycosylation. The interval 614–824 (PTCEEVMPPQ…PGQPLTSSSI (211 aa)) is spacer. Residue S636 is modified to Phosphoserine. At T639 the chain carries Phosphothreonine. 8 positions are modified to phosphoserine: S659, S669, S684, S942, S946, S960, S965, and S967. 4 stretches are compositionally biased toward polar residues: residues 661–674 (TTLY…TVST), 683–692 (DSPSEGSTSG), 935–950 (SGSS…PTEL), and 958–969 (DSSPVMRSNSTL). Disordered stretches follow at residues 661–698 (TTLY…PPQP) and 930–994 (GKRR…VEEE). Residues 825–1021 (RPRKTSSLAL…QAFAMKYSQA (197 aa)) are domain B. Phosphothreonine is present on T968. The span at 971 to 981 (VPQPSSAPPTP) shows a compositional bias: pro residues. A phosphoserine mark is found at S975 and S976. T980 bears the Phosphothreonine mark. Residues S1031, S1064, S1076, and S1108 each carry the phosphoserine modification.

It belongs to the retinoblastoma protein (RB) family. As to quaternary structure, interacts with AATF and RINT1. Component of the DREAM complex (also named LINC complex) at least composed of E2F4, E2F5, LIN9, LIN37, LIN52, LIN54, MYBL1, MYBL2, RBL1, RBL2, RBBP4, TFDP1 and TFDP2. The complex exists in quiescent cells where it represses cell cycle-dependent genes. It dissociates in S phase when LIN9, LIN37, LIN52 and LIN54 form a subcomplex that binds to MYBL2. Interacts with USP4. Interacts with KMT5B, KMT5C and USP4. Interacts with PML. Interacts with RBBP9. Interacts with CD53. Post-translationally, during G0 and early G1 phase of the cell cycle, phosphorylated on Ser-636 and on 5 sites within the domain B. Phosphorylation on Ser-669 in G1 leads to its ubiquitin-dependent proteolysis.

Its subcellular location is the nucleus. Its function is as follows. Key regulator of entry into cell division. Directly involved in heterochromatin formation by maintaining overall chromatin structure and, in particular, that of constitutive heterochromatin by stabilizing histone methylation. Recruits and targets histone methyltransferases KMT5B and KMT5C, leading to epigenetic transcriptional repression. Controls histone H4 'Lys-20' trimethylation. Probably acts as a transcription repressor by recruiting chromatin-modifying enzymes to promoters. Potent inhibitor of E2F-mediated trans-activation, associates preferentially with E2F5. Binds to cyclins A and E. Binds to and may be involved in the transforming capacity of the adenovirus E1A protein. May act as a tumor suppressor. In Mus musculus (Mouse), this protein is Retinoblastoma-like protein 2 (Rbl2).